The sequence spans 686 residues: Glycine--tRNA ligase beta subunit (686 aa).

The segment at 65-99 is disordered; sequence ALSEEKRGPSVERAKDENGEWSKAAQGFARGQGAT. Over residues 67–84 the composition is skewed to basic and acidic residues; that stretch reads SEEKRGPSVERAKDENGE.

It belongs to the class-II aminoacyl-tRNA synthetase family. Tetramer of two alpha and two beta subunits.

It is found in the cytoplasm. The enzyme catalyses tRNA(Gly) + glycine + ATP = glycyl-tRNA(Gly) + AMP + diphosphate. The protein is Glycine--tRNA ligase beta subunit of Leuconostoc citreum (strain KM20).